Reading from the N-terminus, the 834-residue chain is Periplasmic nitrate reductase (834 aa).

Positions 1–29 (MNLTRREFAKANAAAIAAAAAGLPILVRA) form a signal peptide, tat-type signal. One can recognise a 4Fe-4S Mo/W bis-MGD-type domain in the interval 41–97 (LDWNKAPCRFCGTGCSVMVATRDGQVVATHGDIKAEVNRGINCVKGYFLSKIMYGSD). [4Fe-4S] cluster contacts are provided by Cys-48, Cys-51, Cys-55, and Cys-83. Mo-bis(molybdopterin guanine dinucleotide)-binding positions include Lys-85, Gln-152, Asn-177, Cys-181, 214–221 (WGSNMAEM), 245–249 (STFEH), 264–266 (QTD), Met-375, Gln-379, Asn-485, 511–512 (SD), Lys-534, Asp-561, and 721–730 (TGRVLEHWHT). Substrate is bound at residue Phe-797. The Mo-bis(molybdopterin guanine dinucleotide) site is built by Asn-805 and Lys-822.

This sequence belongs to the prokaryotic molybdopterin-containing oxidoreductase family. NasA/NapA/NarB subfamily. As to quaternary structure, component of the periplasmic nitrate reductase NapAB complex composed of NapA and NapB. The cofactor is [4Fe-4S] cluster. Requires Mo-bis(molybdopterin guanine dinucleotide) as cofactor. Post-translationally, predicted to be exported by the Tat system. The position of the signal peptide cleavage has not been experimentally proven.

The protein localises to the periplasm. It catalyses the reaction 2 Fe(II)-[cytochrome] + nitrate + 2 H(+) = 2 Fe(III)-[cytochrome] + nitrite + H2O. Functionally, catalytic subunit of the periplasmic nitrate reductase complex NapAB. Receives electrons from NapB and catalyzes the reduction of nitrate to nitrite. This Pseudomonas paraeruginosa (strain DSM 24068 / PA7) (Pseudomonas aeruginosa (strain PA7)) protein is Periplasmic nitrate reductase.